Consider the following 239-residue polypeptide: Uridylate kinase (239 aa).

10–13 (KFSG) lines the ATP pocket. Residues 18–23 (GENGFG) are involved in allosteric activation by GTP. A UMP-binding site is contributed by Gly-52. Residues Gly-53 and Arg-57 each coordinate ATP. UMP-binding positions include Asp-73 and 134–141 (TGNPYFTT). ATP contacts are provided by Thr-161, Tyr-167, and Asp-170.

It belongs to the UMP kinase family. Homohexamer.

The protein localises to the cytoplasm. It carries out the reaction UMP + ATP = UDP + ADP. It functions in the pathway pyrimidine metabolism; CTP biosynthesis via de novo pathway; UDP from UMP (UMPK route): step 1/1. With respect to regulation, allosterically activated by GTP. Inhibited by UTP. In terms of biological role, catalyzes the reversible phosphorylation of UMP to UDP. In Campylobacter jejuni subsp. doylei (strain ATCC BAA-1458 / RM4099 / 269.97), this protein is Uridylate kinase.